Reading from the N-terminus, the 864-residue chain is Leucine--tRNA ligase (864 aa).

The 'HIGH' region signature appears at P42–H52. The 'KMSKS' region signature appears at K624–S628. An ATP-binding site is contributed by K627.

It belongs to the class-I aminoacyl-tRNA synthetase family.

It is found in the cytoplasm. It catalyses the reaction tRNA(Leu) + L-leucine + ATP = L-leucyl-tRNA(Leu) + AMP + diphosphate. The protein is Leucine--tRNA ligase of Burkholderia cenocepacia (strain HI2424).